The chain runs to 291 residues: Small ribosomal subunit biogenesis GTPase RsgA (291 aa).

The region spanning 63–221 (HNELKRPPVS…IADTPGFSAL (159 aa)) is the CP-type G domain. Residues 112–115 (TKKD) and 164–172 (GQSGVGKST) each bind GTP. Zn(2+)-binding residues include C245, C250, H252, and C258.

This sequence belongs to the TRAFAC class YlqF/YawG GTPase family. RsgA subfamily. In terms of assembly, monomer. Associates with 30S ribosomal subunit, binds 16S rRNA. It depends on Zn(2+) as a cofactor.

It is found in the cytoplasm. One of several proteins that assist in the late maturation steps of the functional core of the 30S ribosomal subunit. Helps release RbfA from mature subunits. May play a role in the assembly of ribosomal proteins into the subunit. Circularly permuted GTPase that catalyzes slow GTP hydrolysis, GTPase activity is stimulated by the 30S ribosomal subunit. This Staphylococcus haemolyticus (strain JCSC1435) protein is Small ribosomal subunit biogenesis GTPase RsgA.